A 317-amino-acid chain; its full sequence is L-lactate dehydrogenase 1 (317 aa).

NAD(+) is bound by residues V17, D38, K43, Y69, and 83 to 84 (GA). Substrate contacts are provided by Q86 and R92. Residues S105, 122 to 124 (ATN), and S147 each bind NAD(+). A substrate-binding site is contributed by 124-127 (NPVD). 152 to 155 (DSAR) is a substrate binding site. H179 (proton acceptor) is an active-site residue. Y223 carries the phosphotyrosine modification. T232 contributes to the substrate binding site.

The protein belongs to the LDH/MDH superfamily. LDH family. Homotetramer.

The protein localises to the cytoplasm. It carries out the reaction (S)-lactate + NAD(+) = pyruvate + NADH + H(+). It participates in fermentation; pyruvate fermentation to lactate; (S)-lactate from pyruvate: step 1/1. In terms of biological role, catalyzes the conversion of lactate to pyruvate (Potential). Appears to be the primary factor that allows S.aureus growth during nitrosative stress in both aerobically and anaerobically cultured cells. This is L-lactate dehydrogenase 1 from Staphylococcus aureus (strain USA300).